Consider the following 496-residue polypeptide: Costunolide synthase (496 aa).

Residues 4–24 (FTIFSLVVASLVFFACWALVA) traverse the membrane as a helical; Signal-anchor for type II membrane protein segment. Residues Asn26, Asn168, Asn280, and Asn412 are each glycosylated (N-linked (GlcNAc...) asparagine). Heme is bound at residue Cys434.

This sequence belongs to the cytochrome P450 family. Requires heme as cofactor. Expressed in floral glandular trichomes.

Its subcellular location is the membrane. The catalysed reaction is germacra-1(10),4,11(13)-trien-12-oate + reduced [NADPH--hemoprotein reductase] + O2 = (+)-costunolide + oxidized [NADPH--hemoprotein reductase] + 2 H2O. The protein operates within secondary metabolite biosynthesis; terpenoid biosynthesis. In terms of biological role, involved in the biosynthesis of germacrene-derived sesquiterpene lactones. Component of the parthenolide biosynthetic pathway; parthenolide and conjugates are promising anti-cancer drugs highly active against colon cancer cells. Hydroxylates germacrene A acid to 6-alpha-hydroxy-germacrene A acid, a precursor of sesquiterpene lactones that spontaneously undergoes a lactonization which yields costunolide. The protein is Costunolide synthase of Tanacetum parthenium (Feverfew).